Here is a 107-residue protein sequence, read N- to C-terminus: Protein HitA (107 aa).

Residues 5–107 (IFCKIAAKEI…LHIHIMGTPV (103 aa)) form the HIT domain. The short motif at 97 to 101 (HLHIH) is the Histidine triad motif element.

This chain is Protein HitA (hitA), found in Neisseria gonorrhoeae.